We begin with the raw amino-acid sequence, 258 residues long: 4-oxalmesaconate hydratase (258 aa).

Residues His28, Asp31, and His141 each contribute to the Zn(2+) site.

This sequence belongs to the MshB deacetylase family. Zn(2+) serves as cofactor.

It carries out the reaction 2-hydroxy-4-oxobutane-1,2,4-tricarboxylate = 4-carboxy-2-hydroxy-cis,cis-muconate + H2O. Catalyzes the conversion of oxalomesaconic acid enol (OMAenol) to 4-carboxy-4-hydroxy-2-oxoadipic acid (CHA). Mediates the third step of gallate degradation pathway. This chain is 4-oxalmesaconate hydratase (galB), found in Pseudomonas putida (strain ATCC 47054 / DSM 6125 / CFBP 8728 / NCIMB 11950 / KT2440).